The chain runs to 73 residues: UPF0499 protein CHGG_06021 (73 aa).

Positions 1 to 20 are cleaved as a signal peptide; the sequence is MKSSIHVVLFFLLSLVASMA. 3 cysteine pairs are disulfide-bonded: C41–C55, C48–C60, and C54–C69.

It belongs to the UPF0499 family.

Its subcellular location is the secreted. This is UPF0499 protein CHGG_06021 from Chaetomium globosum (strain ATCC 6205 / CBS 148.51 / DSM 1962 / NBRC 6347 / NRRL 1970) (Soil fungus).